A 331-amino-acid polypeptide reads, in one-letter code: Glycerol-3-phosphate dehydrogenase [NAD(P)+] (331 aa).

NADPH is bound by residues Ser-11, Phe-12, Arg-32, and Lys-106. Sn-glycerol 3-phosphate is bound by residues Lys-106, Gly-134, and Ser-136. NADPH is bound at residue Ala-138. The sn-glycerol 3-phosphate site is built by Lys-189, Asp-242, Ser-252, Arg-253, and Asn-254. Residue Lys-189 is the Proton acceptor of the active site. Arg-253 serves as a coordination point for NADPH. Positions 277 and 279 each coordinate NADPH.

This sequence belongs to the NAD-dependent glycerol-3-phosphate dehydrogenase family.

It is found in the cytoplasm. The catalysed reaction is sn-glycerol 3-phosphate + NAD(+) = dihydroxyacetone phosphate + NADH + H(+). It carries out the reaction sn-glycerol 3-phosphate + NADP(+) = dihydroxyacetone phosphate + NADPH + H(+). Its pathway is membrane lipid metabolism; glycerophospholipid metabolism. Its function is as follows. Catalyzes the reduction of the glycolytic intermediate dihydroxyacetone phosphate (DHAP) to sn-glycerol 3-phosphate (G3P), the key precursor for phospholipid synthesis. This is Glycerol-3-phosphate dehydrogenase [NAD(P)+] from Clostridium perfringens (strain SM101 / Type A).